A 139-amino-acid polypeptide reads, in one-letter code: D-ribose pyranase (139 aa).

His-20 (proton donor) is an active-site residue. Residues Asp-28, His-106, and 128–130 each bind substrate; that span reads YAN.

The protein belongs to the RbsD / FucU family. RbsD subfamily. In terms of assembly, homodecamer.

The protein localises to the cytoplasm. The catalysed reaction is beta-D-ribopyranose = beta-D-ribofuranose. It functions in the pathway carbohydrate metabolism; D-ribose degradation; D-ribose 5-phosphate from beta-D-ribopyranose: step 1/2. Its function is as follows. Catalyzes the interconversion of beta-pyran and beta-furan forms of D-ribose. The sequence is that of D-ribose pyranase from Pectobacterium atrosepticum (strain SCRI 1043 / ATCC BAA-672) (Erwinia carotovora subsp. atroseptica).